Here is a 177-residue protein sequence, read N- to C-terminus: MNLNLILPLKKVVLPISNKEVSIPKMGLKHYNILKDVKGPDENLKLLIDSICPNLSPAEVDFVSIHLLEFNGKIKSRKEIDGYTYDINDVYVCQRLEFQYQGNTFYFRPPGKFEQFLTVSDMLSKCLLRVNDEVKEINFLEMPAFVLKWANDIFTTLAIPGPNGPITGIGNIIGLFE.

In terms of assembly, the gp27 and gp28 proteins seem to combine to form a small hub precursor during morphogenesis.

Functionally, baseplate hub assembly chaperone involved in the tail assembly. In Enterobacteria phage T4 (Bacteriophage T4), this protein is Baseplate hub assembly protein gp28 (28).